Consider the following 160-residue polypeptide: Phosphopantetheine adenylyltransferase (160 aa).

Threonine 10 provides a ligand contact to substrate. Residues 10 to 11 and histidine 18 contribute to the ATP site; that span reads TF. Substrate contacts are provided by lysine 42, leucine 74, and arginine 88. ATP is bound by residues 89–91, glutamate 99, and 124–130; these read GLR and NSFISST.

It belongs to the bacterial CoaD family. In terms of assembly, homohexamer. It depends on Mg(2+) as a cofactor.

It localises to the cytoplasm. The enzyme catalyses (R)-4'-phosphopantetheine + ATP + H(+) = 3'-dephospho-CoA + diphosphate. The protein operates within cofactor biosynthesis; coenzyme A biosynthesis; CoA from (R)-pantothenate: step 4/5. Reversibly transfers an adenylyl group from ATP to 4'-phosphopantetheine, yielding dephospho-CoA (dPCoA) and pyrophosphate. This chain is Phosphopantetheine adenylyltransferase, found in Photobacterium damsela subsp. piscicida (Pasteurella piscicida).